Consider the following 131-residue polypeptide: Antitoxin MqsA (131 aa).

Zn(2+) is bound by residues Cys-3, Cys-6, Cys-37, and Cys-40. An HTH cro/C1-type domain is found at 74 to 127; that stretch reads IVKVRKKLSLTQKEASEIFGGGVNAFSRYEKGNAQPHPSTIKLLRVLDKHPELL. Positions 85-104 form a DNA-binding region, H-T-H motif; sequence QKEASEIFGGGVNAFSRYEK.

In terms of assembly, homodimer. Crystallizes as a heterotetramer with MqsA, MqsR-MqsA(2)-MqsR. Purifies as a probable heterohexamer of 2 MqsR dimers and 1 MqsA dimer. Binds promoter DNA as a dimer. When the 2 dissociate the MsqR mRNA interferase becomes active. Requires Zn(2+) as cofactor. In terms of processing, degraded in the presence of oxidative stress, maybe by the Lon and/or ClpX proteases.

In terms of biological role, antitoxin component of a type II toxin-antitoxin (TA) system. Labile antitoxin that binds to the MqsR mRNA interferase toxin and neutralizes its endoribonuclease activity. Overexpression prevents MqsR-mediated cessation of cell growth and inhibition of cell proliferation. Initially reported to act as a cotranscription factor with MqsA. Following further experiments, the MqsR-MqsA complex does not bind DNA and all reported data are actually due to a small fraction of free MqsA alone binding DNA. Addition of MqsR to a preformed MqsA-promoter DNA complex causes dissociation of the MqsA-DNA complex, probably causing derepression of MqsA-repressed transcripts. MqsA binds to 2 palindromes in the promoter region of the mqsRA operon activating its transcription. Binds to other promoters, inducing mcbR and spy and repressing cspD among others. Binds to and represses the rpoS promoter, the master stress regulator, resulting in decreased cyclic-di-GMP, reduced stress resistance, increased cell motility and decreased biofilm formation; in these experiments 5 TA systems are missing (lacks MazEF, RelEB, ChpB, YoeB-YefM, YafQ-DinJ). An earlier study showed overexpression alone increases biofilm formation, perhaps by repressing cspD; in these experiments the 5 TA systems are present. Represses the csgD promoter. In the presence of stress, when this protein is degraded, the promoters it represses are derepressed, leading to biofilm formation. This TA system mediates cell growth during bile acid deoxycholate stress by degrading mRNA for probable deoxycholate-binding protein YgiS; bile acid detergents such as deoxycholate are important for host defense against bacterial growth in the gall bladder and duodenum. This chain is Antitoxin MqsA, found in Escherichia coli (strain K12).